The primary structure comprises 240 residues: Probable transcriptional regulatory protein MXAN_7062 (240 aa).

This sequence belongs to the TACO1 family.

The protein resides in the cytoplasm. The chain is Probable transcriptional regulatory protein MXAN_7062 from Myxococcus xanthus (strain DK1622).